The chain runs to 305 residues: D-alanine--D-alanine ligase (305 aa).

The 197-residue stretch at 104–300 (RALFASAGIP…FPELVRWMVE (197 aa)) folds into the ATP-grasp domain. An ATP-binding site is contributed by 131 to 181 (LPRPFVVKPLNEGSSVGVFIVRDNQPSPLPDWPFDADEVLVESFIPGRELT). Mg(2+)-binding residues include D249, E267, and N269.

The protein belongs to the D-alanine--D-alanine ligase family. Mg(2+) is required as a cofactor. Mn(2+) serves as cofactor.

It localises to the cytoplasm. It carries out the reaction 2 D-alanine + ATP = D-alanyl-D-alanine + ADP + phosphate + H(+). Its pathway is cell wall biogenesis; peptidoglycan biosynthesis. Functionally, cell wall formation. This is D-alanine--D-alanine ligase from Paramagnetospirillum magneticum (strain ATCC 700264 / AMB-1) (Magnetospirillum magneticum).